The following is a 397-amino-acid chain: DNA excision repair protein ERCC-8 (397 aa).

5 WD repeats span residues 41–81 (IHCS…RQPY), 97–137 (VHKY…IADV), 184–224 (GHRQ…GCLI), 243–282 (AHNG…NTLV), and 332–371 (GHYK…SVPD). Residues 370–397 (PDDDDETSTRSQLNPAFEDAWSSSDEEG) are disordered. A phosphoserine mark is found at S391, S392, and S393.

Part of the CSA complex (also named DCX(ERCC8) complex), a DCX E3 ubiquitin-protein ligase complex containing ERCC8, RBX1, DDB1 and CUL4A; the CSA complex interacts with RNA polymerase II; upon UV irradiation it interacts with the COP9 signalosome and preferentially with the hyperphosphorylated form of RNA polymerase II. Interacts with ERCC6/CSB (via CIM motif); promoting recruitment to lesion-stalled RNA polymerase II (Pol II). Interacts with KIAA1530/UVSSA. Interacts with a subunit of RNA polymerase II TFIIH.

The protein localises to the nucleus. The protein resides in the chromosome. It localises to the nucleus matrix. It participates in protein modification; protein ubiquitination. Substrate-recognition component of the CSA complex, a DCX (DDB1-CUL4-X-box) E3 ubiquitin-protein ligase complex, involved in transcription-coupled nucleotide excision repair (TC-NER), a process during which RNA polymerase II-blocking lesions are rapidly removed from the transcribed strand of active genes. Following recruitment to lesion-stalled RNA polymerase II (Pol II), the CSA complex mediates ubiquitination of Pol II subunit POLR2A/RPB1 at 'Lys-1268', a critical TC-NER checkpoint, governing RNA Pol II stability and initiating DNA damage excision by TFIIH recruitment. The CSA complex also promotes the ubiquitination and subsequent proteasomal degradation of ERCC6/CSB in a UV-dependent manner; ERCC6 degradation is essential for the recovery of RNA synthesis after transcription-coupled repair. Also plays a role in DNA double-strand breaks (DSSBs) repair by non-homologous end joining (NHEJ). The protein is DNA excision repair protein ERCC-8 (ERCC8) of Bos taurus (Bovine).